The sequence spans 195 residues: Large ribosomal subunit protein uL18 (195 aa).

This sequence belongs to the universal ribosomal protein uL18 family. In terms of assembly, part of the 50S ribosomal subunit. Contacts the 5S and 23S rRNAs.

Functionally, this is one of the proteins that bind and probably mediate the attachment of the 5S RNA into the large ribosomal subunit, where it forms part of the central protuberance. The protein is Large ribosomal subunit protein uL18 of Methanococcus vannielii.